The following is a 426-amino-acid chain: Glutamyl-tRNA reductase (426 aa).

Substrate-binding positions include 49-52, serine 109, 114-116, and glutamine 120; these read TCNR and EGQ. Cysteine 50 functions as the Nucleophile in the catalytic mechanism. 189-194 contributes to the NADP(+) binding site; the sequence is GAGKMS.

This sequence belongs to the glutamyl-tRNA reductase family. Homodimer.

The enzyme catalyses (S)-4-amino-5-oxopentanoate + tRNA(Glu) + NADP(+) = L-glutamyl-tRNA(Glu) + NADPH + H(+). It participates in porphyrin-containing compound metabolism; protoporphyrin-IX biosynthesis; 5-aminolevulinate from L-glutamyl-tRNA(Glu): step 1/2. Its pathway is porphyrin-containing compound metabolism; chlorophyll biosynthesis. Catalyzes the NADPH-dependent reduction of glutamyl-tRNA(Glu) to glutamate 1-semialdehyde (GSA). This Thermosynechococcus vestitus (strain NIES-2133 / IAM M-273 / BP-1) protein is Glutamyl-tRNA reductase.